A 238-amino-acid chain; its full sequence is MKVSLFITCLVDMFQSNVGKATVELLERLGCEVDFPEGQICCGQPAYNSGYVKDSKKAMRRMIETFESAEYVVSPSGSCAFMFKEYPHLFRDEPAWAEKAQRLADKTYELTDFIVNVLKIEDVGATLEKKATYHTSCHMTRLLGVTDAPMKLLRHVKGLEFTPLPRKHDCCGFGGTFSVKMSQISEQMVDEKVACVEETAADVLIGADCGCLMNIGGRIGRKNKPIEVMHIAEVLNSR.

The protein belongs to the LutA/YkgE family.

In terms of biological role, is involved in L-lactate degradation and allows cells to grow with lactate as the sole carbon source. The polypeptide is Lactate utilization protein A (Bacillus licheniformis (strain ATCC 14580 / DSM 13 / JCM 2505 / CCUG 7422 / NBRC 12200 / NCIMB 9375 / NCTC 10341 / NRRL NRS-1264 / Gibson 46)).